A 485-amino-acid polypeptide reads, in one-letter code: E3 ubiquitin-protein ligase TRIM58 (485 aa).

The RING-type zinc-finger motif lies at 15 to 59 (CSVCLDFLQEPISVDCGHSFCLRCISEFCEKSDSAQGVYACPQCR). The B box-type zinc finger occupies 90 to 131 (AGSRQCARHGEDLSHFCEEDQTMLCWVCDTSPEHRSHRTETL). Residues Cys95, His98, Cys117, and His123 each contribute to the Zn(2+) site. The stretch at 192-241 (LAQEEQLQLRRLEEEERATLQRLRDSRNRLAQQNKALKELAEELEERSQR) forms a coiled coil. One can recognise a B30.2/SPRY domain in the interval 271–466 (DLKTVCRIPG…LPPMTEAAPG (196 aa)).

The protein belongs to the TRIM/RBCC family. In terms of tissue distribution, expressed in erythroblasts.

The catalysed reaction is S-ubiquitinyl-[E2 ubiquitin-conjugating enzyme]-L-cysteine + [acceptor protein]-L-lysine = [E2 ubiquitin-conjugating enzyme]-L-cysteine + N(6)-ubiquitinyl-[acceptor protein]-L-lysine.. The protein operates within protein modification; protein ubiquitination. E3 ubiquitin ligase induced during late erythropoiesis. Directly binds and ubiquitinates the intermediate chain of the microtubule motor dynein (DYNC1LI1/DYNC1LI2), stimulating the degradation of the dynein holoprotein complex. May participate in the erythroblast enucleation process through regulation of nuclear polarization. In Mus musculus (Mouse), this protein is E3 ubiquitin-protein ligase TRIM58 (Trim58).